Reading from the N-terminus, the 459-residue chain is ATP-dependent 6-phosphofructokinase (459 aa).

ATP is bound by residues G89, 154–155 (RG), and 179–182 (GDGG). D180 lines the Mg(2+) pocket. Substrate is bound by residues 208–210 (TID), 253–255 (MGR), E309, and 368–371 (YAIR). Residue D210 is the Proton acceptor of the active site.

Belongs to the phosphofructokinase type A (PFKA) family. PPi-dependent PFK group II subfamily. Atypical ATP-dependent clade 'X' sub-subfamily. In terms of assembly, homodimer. Requires Mg(2+) as cofactor.

The protein resides in the cytoplasm. The enzyme catalyses beta-D-fructose 6-phosphate + ATP = beta-D-fructose 1,6-bisphosphate + ADP + H(+). It participates in carbohydrate degradation; glycolysis; D-glyceraldehyde 3-phosphate and glycerone phosphate from D-glucose: step 3/4. Its activity is regulated as follows. AMP causes 20-40% inhibition and diphosphate causes 20-50% inhibition. ADP, citrate, PEP and FBP have no effect. Catalyzes the phosphorylation of D-fructose 6-phosphate to fructose 1,6-bisphosphate by ATP, the first committing step of glycolysis. This Amycolatopsis methanolica protein is ATP-dependent 6-phosphofructokinase.